A 182-amino-acid polypeptide reads, in one-letter code: Peptide deformylase (182 aa).

Residues Cys-110 and His-153 each contribute to the Fe cation site. Residue Glu-154 is part of the active site. His-157 provides a ligand contact to Fe cation.

The protein belongs to the polypeptide deformylase family. It depends on Fe(2+) as a cofactor.

The enzyme catalyses N-terminal N-formyl-L-methionyl-[peptide] + H2O = N-terminal L-methionyl-[peptide] + formate. Removes the formyl group from the N-terminal Met of newly synthesized proteins. Requires at least a dipeptide for an efficient rate of reaction. N-terminal L-methionine is a prerequisite for activity but the enzyme has broad specificity at other positions. The chain is Peptide deformylase from Halalkalibacterium halodurans (strain ATCC BAA-125 / DSM 18197 / FERM 7344 / JCM 9153 / C-125) (Bacillus halodurans).